We begin with the raw amino-acid sequence, 901 residues long: Protein translocase subunit SecA (901 aa).

ATP-binding positions include Gln-87, 105–109 (GEGKT), and Asp-512. Positions 858-891 (SHQDDDTAAAAALAAQTGDRKVGRNDPCPCGSGK) are disordered. Zn(2+)-binding residues include Cys-885, Cys-887, Cys-896, and His-897.

Belongs to the SecA family. Monomer and homodimer. Part of the essential Sec protein translocation apparatus which comprises SecA, SecYEG and auxiliary proteins SecDF-YajC and YidC. Zn(2+) serves as cofactor.

It is found in the cell inner membrane. It localises to the cytoplasm. It carries out the reaction ATP + H2O + cellular proteinSide 1 = ADP + phosphate + cellular proteinSide 2.. Its function is as follows. Part of the Sec protein translocase complex. Interacts with the SecYEG preprotein conducting channel. Has a central role in coupling the hydrolysis of ATP to the transfer of proteins into and across the cell membrane, serving both as a receptor for the preprotein-SecB complex and as an ATP-driven molecular motor driving the stepwise translocation of polypeptide chains across the membrane. This chain is Protein translocase subunit SecA, found in Escherichia fergusonii (strain ATCC 35469 / DSM 13698 / CCUG 18766 / IAM 14443 / JCM 21226 / LMG 7866 / NBRC 102419 / NCTC 12128 / CDC 0568-73).